The chain runs to 207 residues: Small ribosomal subunit protein uS4 (207 aa).

Positions 31–53 (KAKFDSKPGQHGRTSGTRTSDFG) are disordered. Polar residues predominate over residues 42-52 (GRTSGTRTSDF). Positions 97 to 158 (SRLDNVVYRM…KSKKQTRVTE (62 aa)) constitute an S4 RNA-binding domain.

Belongs to the universal ribosomal protein uS4 family. Part of the 30S ribosomal subunit. Contacts protein S5. The interaction surface between S4 and S5 is involved in control of translational fidelity.

One of the primary rRNA binding proteins, it binds directly to 16S rRNA where it nucleates assembly of the body of the 30S subunit. Functionally, with S5 and S12 plays an important role in translational accuracy. The protein is Small ribosomal subunit protein uS4 of Polaromonas sp. (strain JS666 / ATCC BAA-500).